The following is a 229-amino-acid chain: Large ribosomal subunit protein uL1 (229 aa).

This sequence belongs to the universal ribosomal protein uL1 family. As to quaternary structure, part of the 50S ribosomal subunit.

Its function is as follows. Binds directly to 23S rRNA. The L1 stalk is quite mobile in the ribosome, and is involved in E site tRNA release. Functionally, protein L1 is also a translational repressor protein, it controls the translation of the L11 operon by binding to its mRNA. In Phytoplasma australiense, this protein is Large ribosomal subunit protein uL1.